A 181-amino-acid polypeptide reads, in one-letter code: Adenine phosphoribosyltransferase (181 aa).

The protein belongs to the purine/pyrimidine phosphoribosyltransferase family. Homodimer.

It localises to the cytoplasm. The catalysed reaction is AMP + diphosphate = 5-phospho-alpha-D-ribose 1-diphosphate + adenine. It participates in purine metabolism; AMP biosynthesis via salvage pathway; AMP from adenine: step 1/1. Functionally, catalyzes a salvage reaction resulting in the formation of AMP, that is energically less costly than de novo synthesis. The polypeptide is Adenine phosphoribosyltransferase (Vibrio atlanticus (strain LGP32) (Vibrio splendidus (strain Mel32))).